The primary structure comprises 142 residues: Large ribosomal subunit protein uL11 (142 aa).

The protein belongs to the universal ribosomal protein uL11 family. Part of the ribosomal stalk of the 50S ribosomal subunit. Interacts with L10 and the large rRNA to form the base of the stalk. L10 forms an elongated spine to which L12 dimers bind in a sequential fashion forming a multimeric L10(L12)X complex. One or more lysine residues are methylated.

Its function is as follows. Forms part of the ribosomal stalk which helps the ribosome interact with GTP-bound translation factors. The protein is Large ribosomal subunit protein uL11 of Glaesserella parasuis serovar 5 (strain SH0165) (Haemophilus parasuis).